The primary structure comprises 776 residues: Protein STRUBBELIG-RECEPTOR FAMILY 3 (776 aa).

The signal sequence occupies residues 1–29 (MAAKRSIYCLLLLPLLLSLLIWIPSISLA). At 30 to 35 (ATNPDD) the chain is on the cytoplasmic side. A helical transmembrane segment spans residues 36–56 (VAAINGLFAALGAPVLPGWIA). At 57 to 316 (SGGDPCGEAW…KGKNSSHTKK (260 aa)) the chain is on the extracellular side. A glycan (N-linked (GlcNAc...) asparagine) is linked at asparagine 72. LRR repeat units follow at residues 99–120 (SIRGIDFSNNRIGGSIPSTLPV), 121–143 (TLQHFFLSANQFTGSIPESLGTL), 145–167 (FLNDMSLNDNLLSGELPDVFQNL), 169–191 (GLINLDISSNNISGTLPPSMENL), 193–215 (TLTTLRVQNNQLSGTLDVLQGLP), and 216–236 (LQDLNIENNLFSGPIPDKLLS). A glycan (N-linked (GlcNAc...) asparagine) is linked at asparagine 179. Residues asparagine 248 and asparagine 253 are each glycosylated (N-linked (GlcNAc...) asparagine). Residues 251–311 (MINSTSTAPS…SSENSKGKNS (61 aa)) are disordered. Low complexity predominate over residues 254-268 (STSTAPSLSPSLSPT). The span at 269-284 (KPAPTRPFSGVPPPPN) shows a compositional bias: pro residues. The span at 298 to 309 (SEGSSSENSKGK) shows a compositional bias: low complexity. Asparagine 310 carries N-linked (GlcNAc...) asparagine glycosylation. A helical transmembrane segment spans residues 317–337 (IILIAFAGVLVFIILVLAILL). The Cytoplasmic portion of the chain corresponds to 338–776 (LLPKCARRRE…RHGSGDSTAD (439 aa)). The interval 355–440 (PHQVGADRGS…PPPPPPPPPP (86 aa)) is disordered. Residues 381–407 (RSEKVQREPFKKAGEEPKVLHDLERLR) show a composition bias toward basic and acidic residues. Pro residues predominate over residues 426–440 (MPPPPPPPPPPPPPP). A Protein kinase domain is found at 485–763 (FAQENLIGSG…EVVQDLLDMI (279 aa)). ATP-binding positions include 491–499 (IGSGMLGSV) and lysine 513.

Belongs to the protein kinase superfamily. Ser/Thr protein kinase family. Expressed in seedlings, roots, stems, leaves, flowers and siliques.

It localises to the membrane. Not essential for epidermal patterning and not redundant with STRUBBELIG. In Arabidopsis thaliana (Mouse-ear cress), this protein is Protein STRUBBELIG-RECEPTOR FAMILY 3 (SRF3).